A 366-amino-acid chain; its full sequence is Aldo-keto reductase AFTS1 (366 aa).

An NADP(+)-binding site is contributed by Asp-75. Tyr-80 acts as the Proton donor in catalysis. Residue His-172 participates in substrate binding. Residues 202-203 (SS), Gln-228, 257-267 (GSLASGRLARP), and 329-337 (SSVERIDEA) each bind NADP(+).

Belongs to the aldo/keto reductase family.

It functions in the pathway mycotoxin biosynthesis. Aldo-keto reductase; part of the gene clusters that mediate the biosynthesis of the host-selective toxins (HSTs) AF-toxins responsible for Alternaria black spot of strawberry disease by the strawberry pathotype. AF-toxin I and III are valine derivatives of 2,3-dyhydroxy-isovaleric acid and 2-hydroxy-isovaleric acid respectively, while AF II is an isoleucine derivative of 2-hydroxy-valeric acid. These derivatives are bound to a 9,10-epoxy-8-hydroxy-9-methyl-decatrienoic acid (EDA) moiety. On cellular level, AF-toxins affect plasma membrane of susceptible cells and cause a sudden increase in loss of K(+) after a few minutes of toxin treatment. The aldo-keto reductase AFTS1 catalyzes the conversion of 2-keto-isovaleric acid (2-KIV) to 2-hydroxy-isovaleric acid (2-HIV) by reduction of its ketone to an alcohol. The acyl-CoA ligase AFT1, the hydrolase AFT2 and the enoyl-CoA hydratases AFT3 and AFT6, but also the polyketide synthase AFT9, the acyl-CoA dehydrogenase AFT10, the cytochrome P450 monooxygenase AFT11 and the oxidoreductase AFT12 are all involved in the biosynthesis of the AK-, AF- and ACT-toxin common EDA structural moiety. The exact function of each enzyme, and of additional enzymes identified within the AF-toxin clusters have still to be determined. The polypeptide is Aldo-keto reductase AFTS1 (Alternaria alternata (Alternaria rot fungus)).